Consider the following 303-residue polypeptide: Acetylglutamate kinase (303 aa).

Substrate is bound by residues 76-77, R98, and N192; that span reads GG.

Belongs to the acetylglutamate kinase family. ArgB subfamily.

It is found in the cytoplasm. It catalyses the reaction N-acetyl-L-glutamate + ATP = N-acetyl-L-glutamyl 5-phosphate + ADP. It participates in amino-acid biosynthesis; L-arginine biosynthesis; N(2)-acetyl-L-ornithine from L-glutamate: step 2/4. In terms of biological role, catalyzes the ATP-dependent phosphorylation of N-acetyl-L-glutamate. This chain is Acetylglutamate kinase, found in Chlorobium phaeobacteroides (strain DSM 266 / SMG 266 / 2430).